The following is a 93-amino-acid chain: DNA/RNA-binding protein Alba 2 (93 aa).

It belongs to the histone-like Alba family.

The protein localises to the cytoplasm. The protein resides in the chromosome. In terms of biological role, binds double-stranded DNA tightly but without sequence specificity. Involved in DNA compaction. The chain is DNA/RNA-binding protein Alba 2 from Methanopyrus kandleri (strain AV19 / DSM 6324 / JCM 9639 / NBRC 100938).